Reading from the N-terminus, the 333-residue chain is Type II restriction enzyme XcyI (333 aa).

It belongs to the XcyI type II restriction endonuclease family. As to quaternary structure, monomer. The cofactor is Mg(2+).

It catalyses the reaction Endonucleolytic cleavage of DNA to give specific double-stranded fragments with terminal 5'-phosphates.. Its function is as follows. A P subtype restriction enzyme that recognizes the double-stranded sequence 5'-CCCGGG-3' and cleaves after C-1. This Xanthomonas campestris pv. cyanopsidis protein is Type II restriction enzyme XcyI (xcyIR).